The primary structure comprises 208 residues: Large ribosomal subunit protein uL4 (208 aa).

Residues 44-76 (RRQGTQSTKTKSEVRGGGRKPWRQKGTGRARHG) form a disordered region. A compositionally biased stretch (basic residues) spans 60 to 76 (GGRKPWRQKGTGRARHG).

Belongs to the universal ribosomal protein uL4 family. In terms of assembly, part of the 50S ribosomal subunit.

In terms of biological role, one of the primary rRNA binding proteins, this protein initially binds near the 5'-end of the 23S rRNA. It is important during the early stages of 50S assembly. It makes multiple contacts with different domains of the 23S rRNA in the assembled 50S subunit and ribosome. Forms part of the polypeptide exit tunnel. The protein is Large ribosomal subunit protein uL4 of Acetivibrio thermocellus (strain ATCC 27405 / DSM 1237 / JCM 9322 / NBRC 103400 / NCIMB 10682 / NRRL B-4536 / VPI 7372) (Clostridium thermocellum).